A 214-amino-acid chain; its full sequence is Adenylate kinase (214 aa).

10–15 (GAGKGT) is a binding site for ATP. Residues 30–59 (STGDMLRGAIKAGTDLGKQAKTLMDAGQLV) are NMP. AMP contacts are provided by residues threonine 31, arginine 36, 57–59 (QLV), 85–88 (GFPR), and glutamine 92. The LID stretch occupies residues 122–159 (GRRVHQASGRTYHVVYNPPKVEGKDDVTGEDLIIRADD). Residues arginine 123 and 132–133 (TY) contribute to the ATP site. AMP contacts are provided by arginine 156 and arginine 167. Residue lysine 200 coordinates ATP.

This sequence belongs to the adenylate kinase family. As to quaternary structure, monomer.

It is found in the cytoplasm. It catalyses the reaction AMP + ATP = 2 ADP. The protein operates within purine metabolism; AMP biosynthesis via salvage pathway; AMP from ADP: step 1/1. Functionally, catalyzes the reversible transfer of the terminal phosphate group between ATP and AMP. Plays an important role in cellular energy homeostasis and in adenine nucleotide metabolism. The sequence is that of Adenylate kinase from Pasteurella multocida (strain Pm70).